We begin with the raw amino-acid sequence, 104 residues long: uncharacterized protein (104 aa).

Helical transmembrane passes span L45 to F65 and L70 to L90.

The protein resides in the membrane. This is an uncharacterized protein from Saccharomyces cerevisiae (strain ATCC 204508 / S288c) (Baker's yeast).